The following is a 144-amino-acid chain: Cell division protein SepF (144 aa).

Belongs to the SepF family. Homodimer. Interacts with FtsZ.

It is found in the cytoplasm. In terms of biological role, cell division protein that is part of the divisome complex and is recruited early to the Z-ring. Probably stimulates Z-ring formation, perhaps through the cross-linking of FtsZ protofilaments. Its function overlaps with FtsA. The sequence is that of Cell division protein SepF from Oceanobacillus iheyensis (strain DSM 14371 / CIP 107618 / JCM 11309 / KCTC 3954 / HTE831).